The primary structure comprises 347 residues: GMP reductase (347 aa).

108-131 is a binding site for NADP(+); it reads DDFTKTRQILAMSTALRFICVDVA. 2 residues coordinate K(+): Gly-181 and Gly-183. The active-site Thioimidate intermediate is the Cys-186. 216 to 239 is an NADP(+) binding site; that stretch reads IVGDGGCTCPGDVAKAFGGGADFV.

It belongs to the IMPDH/GMPR family. GuaC type 1 subfamily. In terms of assembly, homotetramer.

The enzyme catalyses IMP + NH4(+) + NADP(+) = GMP + NADPH + 2 H(+). In terms of biological role, catalyzes the irreversible NADPH-dependent deamination of GMP to IMP. It functions in the conversion of nucleobase, nucleoside and nucleotide derivatives of G to A nucleotides, and in maintaining the intracellular balance of A and G nucleotides. This Aeromonas salmonicida (strain A449) protein is GMP reductase.